The following is a 914-amino-acid chain: NADH-quinone oxidoreductase subunit G (914 aa).

One can recognise a 2Fe-2S ferredoxin-type domain in the interval 1 to 83 (MATIHVDGKE…GTFISIDDSE (83 aa)). [2Fe-2S] cluster-binding residues include cysteine 34, cysteine 45, cysteine 48, and cysteine 67. The 4Fe-4S His(Cys)3-ligated-type domain occupies 83 to 122 (EAKAFRESVVEWLMTNHPHDCPVCEEGGNCHLQDMTVMTG). [4Fe-4S] cluster-binding residues include histidine 99, cysteine 103, cysteine 106, cysteine 112, cysteine 151, cysteine 154, cysteine 157, cysteine 201, cysteine 228, cysteine 231, cysteine 235, and cysteine 263. Positions 221-277 (MQFAPSICQQCSVGCNTSPGERYGELRRIENRYNGSVNHYFMCDRGRFGYGYVNLKD) constitute a 4Fe-4S Mo/W bis-MGD-type domain.

Belongs to the complex I 75 kDa subunit family. In terms of assembly, composed of 13 different subunits. Subunits NuoCD, E, F, and G constitute the peripheral sector of the complex. It depends on [2Fe-2S] cluster as a cofactor. [4Fe-4S] cluster is required as a cofactor.

The enzyme catalyses a quinone + NADH + 5 H(+)(in) = a quinol + NAD(+) + 4 H(+)(out). In terms of biological role, NDH-1 shuttles electrons from NADH, via FMN and iron-sulfur (Fe-S) centers, to quinones in the respiratory chain. The immediate electron acceptor for the enzyme in this species is believed to be ubiquinone. Couples the redox reaction to proton translocation (for every two electrons transferred, four hydrogen ions are translocated across the cytoplasmic membrane), and thus conserves the redox energy in a proton gradient. This chain is NADH-quinone oxidoreductase subunit G (nuoG), found in Yersinia pestis.